A 359-amino-acid polypeptide reads, in one-letter code: tRNA-specific 2-thiouridylase MnmA (359 aa).

ATP contacts are provided by residues 6–13 (AMSGGVDS) and leucine 32. Cysteine 97 serves as the catalytic Nucleophile. Residues cysteine 97 and cysteine 195 are joined by a disulfide bond. Glycine 121 lines the ATP pocket. The tract at residues 144-146 (KDQ) is interaction with tRNA. Residue cysteine 195 is the Cysteine persulfide intermediate of the active site.

This sequence belongs to the MnmA/TRMU family.

It localises to the cytoplasm. The enzyme catalyses S-sulfanyl-L-cysteinyl-[protein] + uridine(34) in tRNA + AH2 + ATP = 2-thiouridine(34) in tRNA + L-cysteinyl-[protein] + A + AMP + diphosphate + H(+). Functionally, catalyzes the 2-thiolation of uridine at the wobble position (U34) of tRNA, leading to the formation of s(2)U34. This is tRNA-specific 2-thiouridylase MnmA from Tropheryma whipplei (strain Twist) (Whipple's bacillus).